We begin with the raw amino-acid sequence, 339 residues long: Ketol-acid reductoisomerase (NADP(+)) (339 aa).

A KARI N-terminal Rossmann domain is found at 1–182 (MRVYYDRDAD…GGGRAGIIET (182 aa)). Residues 24 to 27 (YGSQ), R48, S51, T53, and 83 to 86 (DELQ) each bind NADP(+). H108 is a catalytic residue. Residue G134 coordinates NADP(+). One can recognise a KARI C-terminal knotted domain in the interval 183 to 328 (TFKEECETDL…AKLRGMMPWI (146 aa)). Mg(2+)-binding residues include D191, E195, E227, and E231. S252 serves as a coordination point for substrate.

Belongs to the ketol-acid reductoisomerase family. Mg(2+) is required as a cofactor.

The enzyme catalyses (2R)-2,3-dihydroxy-3-methylbutanoate + NADP(+) = (2S)-2-acetolactate + NADPH + H(+). The catalysed reaction is (2R,3R)-2,3-dihydroxy-3-methylpentanoate + NADP(+) = (S)-2-ethyl-2-hydroxy-3-oxobutanoate + NADPH + H(+). It participates in amino-acid biosynthesis; L-isoleucine biosynthesis; L-isoleucine from 2-oxobutanoate: step 2/4. It functions in the pathway amino-acid biosynthesis; L-valine biosynthesis; L-valine from pyruvate: step 2/4. Involved in the biosynthesis of branched-chain amino acids (BCAA). Catalyzes an alkyl-migration followed by a ketol-acid reduction of (S)-2-acetolactate (S2AL) to yield (R)-2,3-dihydroxy-isovalerate. In the isomerase reaction, S2AL is rearranged via a Mg-dependent methyl migration to produce 3-hydroxy-3-methyl-2-ketobutyrate (HMKB). In the reductase reaction, this 2-ketoacid undergoes a metal-dependent reduction by NADPH to yield (R)-2,3-dihydroxy-isovalerate. This Methylobacterium radiotolerans (strain ATCC 27329 / DSM 1819 / JCM 2831 / NBRC 15690 / NCIMB 10815 / 0-1) protein is Ketol-acid reductoisomerase (NADP(+)).